Here is a 171-residue protein sequence, read N- to C-terminus: Orange carotenoid-binding domain-containing protein (171 aa).

Residues glycine 21–aspartate 171 form the OCP N-terminal domain.

Belongs to the orange carotenoid-binding protein family. 3'-hydroxyechinenone serves as cofactor.

It is found in the cellular thylakoid membrane. Might act as a photo-protectant, protecting against damage induced by excess light via a process known as non-photochemical quenching (NPQ). This is Orange carotenoid-binding domain-containing protein from Nostoc sp. (strain PCC 7120 / SAG 25.82 / UTEX 2576).